Here is a 361-residue protein sequence, read N- to C-terminus: MNQFTPQPGIMDIALYQGGKAHVDGVANVIKLSSNENPLGPSPAAVEAIRATAAQAHRYPSTDHAELRAAIGAVHGLDPDRIICGVGSDEVLQFVAQAYTGPGDEVIHTEHGFSMYPILARMAGATPVQVPERQRVVDVDAILAAVNDRTRLVFLANPANPTGTMISEAEVTRLADGLPGHVLLVLDGAYAEFVEGFDGGAALVSARDNVIMTRTFSKIYGLGGLRIGWGYAPREIIDVLNRIRQPFNLSTMQLAAAEAAVRDQDWVARCRDQNTTWRTWLAARLAELGVPSDVSCANFILARFADQGEAEACDLFLQSRGLIVRRVAGYNLPQALRITVGDEAGCRAVVDAVRAFKEARA.

N6-(pyridoxal phosphate)lysine is present on lysine 218.

It belongs to the class-II pyridoxal-phosphate-dependent aminotransferase family. Histidinol-phosphate aminotransferase subfamily. In terms of assembly, homodimer. It depends on pyridoxal 5'-phosphate as a cofactor.

It catalyses the reaction L-histidinol phosphate + 2-oxoglutarate = 3-(imidazol-4-yl)-2-oxopropyl phosphate + L-glutamate. It participates in amino-acid biosynthesis; L-histidine biosynthesis; L-histidine from 5-phospho-alpha-D-ribose 1-diphosphate: step 7/9. The polypeptide is Histidinol-phosphate aminotransferase (Ruegeria pomeroyi (strain ATCC 700808 / DSM 15171 / DSS-3) (Silicibacter pomeroyi)).